The primary structure comprises 908 residues: Translation initiation factor IF-2 (908 aa).

Residues 145 to 312 (EIPGLTQRAK…KGKKRQAEKI (168 aa)) form a disordered region. The span at 167 to 177 (VVERPEARPSA) shows a compositional bias: basic and acidic residues. 2 stretches are compositionally biased toward low complexity: residues 194–217 (RPEGGYRPAGPRPAGQRPEGPRPG) and 263–276 (VAGAGKKGPAGAAV). The span at 278–296 (KRKEEFKKTELFEKHERVF) shows a compositional bias: basic and acidic residues. A tr-type G domain is found at 408–577 (KRPPVVTIMG…LLQADVLELK (170 aa)). The tract at residues 417–424 (GHVDHGKT) is G1. 417 to 424 (GHVDHGKT) contributes to the GTP binding site. The segment at 442–446 (GITQH) is G2. Residues 463 to 466 (DTPG) are G3. GTP contacts are provided by residues 463–467 (DTPGH) and 517–520 (NKID). Residues 517-520 (NKID) are G4. Residues 553-555 (SAK) form a G5 region.

This sequence belongs to the TRAFAC class translation factor GTPase superfamily. Classic translation factor GTPase family. IF-2 subfamily.

The protein resides in the cytoplasm. Its function is as follows. One of the essential components for the initiation of protein synthesis. Protects formylmethionyl-tRNA from spontaneous hydrolysis and promotes its binding to the 30S ribosomal subunits. Also involved in the hydrolysis of GTP during the formation of the 70S ribosomal complex. In Geotalea daltonii (strain DSM 22248 / JCM 15807 / FRC-32) (Geobacter daltonii), this protein is Translation initiation factor IF-2.